The sequence spans 82 residues: Small ribosomal subunit protein bS18 (82 aa).

The disordered stretch occupies residues 1–25 (MTEMNQTAIRRPFHRRRKTCPFSGT).

This sequence belongs to the bacterial ribosomal protein bS18 family. In terms of assembly, part of the 30S ribosomal subunit. Forms a tight heterodimer with protein bS6.

In terms of biological role, binds as a heterodimer with protein bS6 to the central domain of the 16S rRNA, where it helps stabilize the platform of the 30S subunit. This chain is Small ribosomal subunit protein bS18, found in Bartonella henselae (strain ATCC 49882 / DSM 28221 / CCUG 30454 / Houston 1) (Rochalimaea henselae).